Consider the following 761-residue polypeptide: Complement factor B (761 aa).

The N-terminal stretch at 1–25 is a signal peptide; the sequence is MGIGHNPRLCLVPLILGLLCGGVGM. Sushi domains follow at residues 35–100, 101–160, and 163–220; these read SPCS…ECKA, IRCP…ICDD, and TYCP…SCQD. 6 cysteine pairs are disulfide-bonded: Cys37/Cys76, Cys62/Cys98, Cys103/Cys145, Cys131/Cys158, Cys165/Cys205, and Cys191/Cys218. 2 N-linked (GlcNAc...) asparagine glycosylation sites follow: Asn122 and Asn142. A VWFA domain is found at 270–469; that stretch reads NIYLVLDGSD…NLEDVFVQML (200 aa). 2 residues coordinate Mg(2+): Ser278 and Ser280. Asn285 is a glycosylation site (N-linked (GlcNAc...) asparagine). Thr353 contacts Mg(2+). A glycan (N-linked (GlcNAc...) asparagine) is linked at Asn378. A Peptidase S1 domain is found at 477–754; it reads LCGMVWEHKD…VLPWLKEKLQ (278 aa). 5 disulfide bridges follow: Cys478–Cys596, Cys511–Cys527, Cys599–Cys615, Cys656–Cys682, and Cys695–Cys725. Residues His526 and Asp576 each act as charge relay system in the active site. Ser699 (charge relay system) is an active-site residue.

It belongs to the peptidase S1 family. Monomer. Interacts with complement C3b; this interaction is dependent on the presence of Mg(2+). In terms of assembly, catalytic component of the C3 convertase of the alternative complement pathway, also named C3bBb, composed of complement factor B Bb and complement C3b. Catalytic component of the C5 convertase of the alternative complement pathway, also named C3bBb3b, composed of complement factor B Bb and additional molecules of complement C3b. Interacts to CFP; this interaction contributes to the stabilization of the active C3-convertase enzyme complex. It depends on Mg(2+) as a cofactor. The cofactor is Mn(2+). In terms of processing, cleaved by CFD following activation of the alternative complement system, generating Ba and Bb chains. Cleavage and activation takes place when CFB is already associated with complement C3b.

It is found in the secreted. It localises to the cell surface. The catalysed reaction is Cleavage of Arg-|-Ser bond in complement component C3 alpha-chain to yield C3a and C3b, and Arg-|-Xaa bond in complement component C5 alpha-chain to yield C5a and C5b.. Functionally, precursor of the catalytic component of the C3 and C5 convertase complexes of the alternative pathway of the complement system, a cascade of proteins that leads to phagocytosis and breakdown of pathogens and signaling that strengthens the adaptive immune system. The alternative complement pathway acts as an amplification loop that enhances other complement pathways (classical, lectin and GZMK) by promoting formation of additional C3 and C5 convertases. CFB is cleaved and activated by CFD to generate Ba and Bb chains; Bb chain constituting the catalytic component of the C3 and C5 convertases. Serine protease component of the complement C3 and C5 convertase complexes of the alternative complement pathway. Following cleavage and activation by factor D (CFD), forms the C3 convertase together with complement C3b. As part of the C3 convertase, cleaves and activates C3 into C3a anaphylatoxin and C3b opsonin, the next components of the complement pathways. When an additional complement C3b molecule binds to the C3 convertase, forms the C5 convertase, which cleaves and activates C5 into C5a anaphylatoxin and C5b component of the membrane attack complex. Its function is as follows. Involved in proliferation and differentiation of preactivated B-lymphocytes, rapid spreading of peripheral blood monocytes, stimulation of lymphocyte blastogenesis and lysis of erythrocytes. This chain is Complement factor B (CFB), found in Bos taurus (Bovine).